Consider the following 224-residue polypeptide: Endonuclease NucS (224 aa).

The protein belongs to the NucS endonuclease family.

It localises to the cytoplasm. Functionally, cleaves both 3' and 5' ssDNA extremities of branched DNA structures. This is Endonuclease NucS from Rhodococcus jostii (strain RHA1).